The sequence spans 952 residues: Protocadherin-20 (952 aa).

Positions 1–60 (MRGRGNARSLLVQAVSLRPATWHPCLDMGHLHRPSSRTSHRNLPHVFLLFLFVGPFNCLA) are cleaved as a signal peptide. At 61–891 (SYSRATELLY…VESMSCMPTL (831 aa)) the chain is on the extracellular side. 6 Cadherin domains span residues 64-210 (RATE…APQF), 211-321 (PISE…CPLF), 322-536 (IDSQ…APVF), 537-640 (LQPL…SPRF), 641-743 (INKD…PPLV), and 747-864 (QSNM…EPEI). N-linked (GlcNAc...) asparagine glycosylation is present at N135. N327 and N333 each carry an N-linked (GlcNAc...) asparagine glycan. Residues N681, N749, N804, N845, and N850 are each glycosylated (N-linked (GlcNAc...) asparagine). Residues 892–912 (VALSVISLGSITLVTGMGIYI) form a helical membrane-spanning segment. The Cytoplasmic portion of the chain corresponds to 913 to 952 (CLRKGKKHHREDDNLEVQIPLKGKIDLCMRERKPVDISNI).

It is found in the cell membrane. Its function is as follows. Potential calcium-dependent cell-adhesion protein. The chain is Protocadherin-20 (Pcdh20) from Mus musculus (Mouse).